The sequence spans 557 residues: Formate--tetrahydrofolate ligase (557 aa).

66 to 73 (TPAGEGKS) is a binding site for ATP.

Belongs to the formate--tetrahydrofolate ligase family.

The catalysed reaction is (6S)-5,6,7,8-tetrahydrofolate + formate + ATP = (6R)-10-formyltetrahydrofolate + ADP + phosphate. Its pathway is one-carbon metabolism; tetrahydrofolate interconversion. This Clostridium botulinum (strain 657 / Type Ba4) protein is Formate--tetrahydrofolate ligase.